The chain runs to 200 residues: Octanoyltransferase (200 aa).

The 174-residue stretch at 27–200 (GAEDDQLWLV…WAELFSARWR (174 aa)) folds into the BPL/LPL catalytic domain. Residues 66–73 (RGGQITYH), 134–136 (SLG), and 147–149 (GIA) each bind substrate. The Acyl-thioester intermediate role is filled by cysteine 165.

The protein belongs to the LipB family.

The protein resides in the cytoplasm. It carries out the reaction octanoyl-[ACP] + L-lysyl-[protein] = N(6)-octanoyl-L-lysyl-[protein] + holo-[ACP] + H(+). It functions in the pathway protein modification; protein lipoylation via endogenous pathway; protein N(6)-(lipoyl)lysine from octanoyl-[acyl-carrier-protein]: step 1/2. Catalyzes the transfer of endogenously produced octanoic acid from octanoyl-acyl-carrier-protein onto the lipoyl domains of lipoate-dependent enzymes. Lipoyl-ACP can also act as a substrate although octanoyl-ACP is likely to be the physiological substrate. This chain is Octanoyltransferase, found in Dichelobacter nodosus (strain VCS1703A).